Here is a 249-residue protein sequence, read N- to C-terminus: Pyridoxine 5'-phosphate synthase (249 aa).

Asn-10 is a 3-amino-2-oxopropyl phosphate binding site. 12–13 serves as a coordination point for 1-deoxy-D-xylulose 5-phosphate; sequence DH. Arg-21 contributes to the 3-amino-2-oxopropyl phosphate binding site. The Proton acceptor role is filled by His-46. Residues Arg-48 and His-53 each contribute to the 1-deoxy-D-xylulose 5-phosphate site. Glu-73 (proton acceptor) is an active-site residue. Residue Thr-103 coordinates 1-deoxy-D-xylulose 5-phosphate. His-194 acts as the Proton donor in catalysis. 3-amino-2-oxopropyl phosphate-binding positions include Gly-195 and 216 to 217; that span reads GH.

It belongs to the PNP synthase family. As to quaternary structure, homooctamer; tetramer of dimers.

The protein resides in the cytoplasm. It carries out the reaction 3-amino-2-oxopropyl phosphate + 1-deoxy-D-xylulose 5-phosphate = pyridoxine 5'-phosphate + phosphate + 2 H2O + H(+). Its pathway is cofactor biosynthesis; pyridoxine 5'-phosphate biosynthesis; pyridoxine 5'-phosphate from D-erythrose 4-phosphate: step 5/5. Functionally, catalyzes the complicated ring closure reaction between the two acyclic compounds 1-deoxy-D-xylulose-5-phosphate (DXP) and 3-amino-2-oxopropyl phosphate (1-amino-acetone-3-phosphate or AAP) to form pyridoxine 5'-phosphate (PNP) and inorganic phosphate. This Rhodospirillum rubrum (strain ATCC 11170 / ATH 1.1.1 / DSM 467 / LMG 4362 / NCIMB 8255 / S1) protein is Pyridoxine 5'-phosphate synthase.